The sequence spans 615 residues: Delta(14)-sterol reductase LBR (615 aa).

The region spanning 1 to 62 is the Tudor domain; sequence MPSRKFADGE…DIKPLTSFRQ (62 aa). Topologically, residues 1-211 are nuclear; the sequence is MPSRKFADGE…IRAKDLEFGG (211 aa). The interval 52–109 is disordered; it reads NDIKPLTSFRQRKGGSTSSSPSRRRGSRSRSRSRSPGRPPKSARRSASASHQADIKEA. At Lys-55 the chain carries N6-acetyllysine. Thr-58 bears the Phosphothreonine mark. Ser-59 and Ser-67 each carry phosphoserine. Phosphoserine; by CDK1 is present on residues Ser-71 and Ser-86. Basic residues predominate over residues 73-86; that stretch reads SRRRGSRSRSRSRS. A phosphoserine mark is found at Ser-97 and Ser-99. Thr-118 is subject to Phosphothreonine. Ser-128 is modified (phosphoserine). Thr-200 is modified (phosphothreonine). The next 8 helical transmembrane spans lie at 212-232, 258-278, 299-319, 326-346, 386-406, 447-467, 481-501, and 561-581; these read VPGV…LLLM, VFGV…LPIG, FYAF…GVEF, FLQF…YLYM, FCEL…MLLA, IIHD…VPFI, EVSW…YVIF, and PCGF…MLLV. N6-acetyllysine occurs at positions 594 and 601.

This sequence belongs to the ERG4/ERG24 family. Interacts with CBX5. Interacts with DNA. Interaction with DNA is sequence independent with higher affinity for supercoiled and relaxed circular DNA than linear DNA. Interacts with lamin B. Interacts with CLNK. Interacts with TMEM147; promoting LBR localization to the nucleus inner membrane. Post-translationally, phosphorylated by CDK1 in mitosis when the inner nuclear membrane breaks down into vesicles that dissociate from the lamina and the chromatin. It is phosphorylated by different protein kinases in interphase when the membrane is associated with these structures. Phosphorylation of LBR and HP1 proteins may be responsible for some of the alterations in chromatin organization and nuclear structure which occur at various times during the cell cycle. Phosphorylated by SRPK1. In late anaphase LBR is dephosphorylated, probably by PP1 and/or PP2A, allowing reassociation with chromatin. Expressed in the bone marrow, liver, heart, adrenal gland, lung, placenta and uterus. Expressed in osteoclasts and osteoblast-like cells.

The protein resides in the nucleus inner membrane. The protein localises to the endoplasmic reticulum membrane. It localises to the cytoplasm. Its subcellular location is the nucleus. The enzyme catalyses 5alpha-cholest-8,14-dien-3beta-ol + NADPH + H(+) = 5alpha-cholest-8-en-3beta-ol + NADP(+). It catalyses the reaction 4,4-dimethyl-5alpha-cholesta-8,24-dien-3beta-ol + NADP(+) = 4,4-dimethyl-5alpha-cholesta-8,14,24-trien-3beta-ol + NADPH + H(+). It carries out the reaction 4,4-dimethyl-8,14-cholestadien-3beta-ol + NADPH + H(+) = 4,4-dimethyl-5alpha-cholest-8-en-3beta-ol + NADP(+). It functions in the pathway steroid biosynthesis; cholesterol biosynthesis. Its function is as follows. Catalyzes the reduction of the C14-unsaturated bond of lanosterol, as part of the metabolic pathway leading to cholesterol biosynthesis. Plays a critical role in myeloid cell cholesterol biosynthesis which is essential to both myeloid cell growth and functional maturation. Mediates the activation of NADPH oxidases, perhaps by maintaining critical levels of cholesterol required for membrane lipid raft formation during neutrophil differentiation. Anchors the lamina and the heterochromatin to the inner nuclear membrane. This chain is Delta(14)-sterol reductase LBR (LBR), found in Homo sapiens (Human).